A 147-amino-acid chain; its full sequence is UPAR/Ly6 domain-containing protein CG9338 (147 aa).

The signal sequence occupies residues 1-23 (MVSSVKMILALTVLATVACTGYA). Topologically, residues 24–126 (IKCYQCDSLT…VCTEDECNGT (103 aa)) are extracellular. 5 cysteine pairs are disulfide-bonded: Cys26–Cys72, Cys29–Cys37, Cys51–Cys89, Cys101–Cys115, and Cys118–Cys123. A glycan (N-linked (GlcNAc...) asparagine) is linked at Asn68. Asn124 carries the GPI-anchor amidated asparagine lipid modification. The propeptide at 125–147 (GTSSLAPIAGVILLFFGLARLLA) is removed in mature form. Residues 127 to 147 (SSLAPIAGVILLFFGLARLLA) form a helical membrane-spanning segment.

It belongs to the quiver family.

It localises to the cell membrane. Its function is as follows. May be involved in regulating neuron excitability. In Drosophila melanogaster (Fruit fly), this protein is UPAR/Ly6 domain-containing protein CG9338.